We begin with the raw amino-acid sequence, 384 residues long: Probable circularly permuted 1,3-beta-glucanase PGA52 (384 aa).

Residues 1–17 (MLFSSLLVSTLVSVATA) form the signal peptide. 5 N-linked (GlcNAc...) asparagine glycosylation sites follow: Asn118, Asn128, Asn170, Asn210, and Asn244. The short motif at 254 to 259 (EFDIFE) is the ExDxxE motif element. N-linked (GlcNAc...) asparagine glycans are attached at residues Asn262 and Asn318. The GPI-anchor amidated serine moiety is linked to residue Ser361. The propeptide at 362 to 384 (GGVSYQPSFITNLLMTVLTLWVI) is removed in mature form.

This sequence belongs to the PGA52 family.

Its subcellular location is the cell membrane. The enzyme catalyses Hydrolysis of (1-&gt;3)-beta-D-glucosidic linkages in (1-&gt;3)-beta-D-glucans.. Probable circularly permuted 1,3-beta-glucanase involved in cell wall modification through beta-1,3-glucan network alterations such as increased branching or remodeling. The sequence is that of Probable circularly permuted 1,3-beta-glucanase PGA52 (PGA52) from Candida albicans (strain SC5314 / ATCC MYA-2876) (Yeast).